Here is a 278-residue protein sequence, read N- to C-terminus: 3-methyl-2-oxobutanoate hydroxymethyltransferase (278 aa).

Residues aspartate 43 and aspartate 82 each coordinate Mg(2+). 3-methyl-2-oxobutanoate is bound by residues aspartate 43 to serine 44, aspartate 82, and lysine 112. Residue glutamate 114 coordinates Mg(2+). The active-site Proton acceptor is the glutamate 181.

This sequence belongs to the PanB family. Homodecamer; pentamer of dimers. It depends on Mg(2+) as a cofactor.

Its subcellular location is the cytoplasm. The catalysed reaction is 3-methyl-2-oxobutanoate + (6R)-5,10-methylene-5,6,7,8-tetrahydrofolate + H2O = 2-dehydropantoate + (6S)-5,6,7,8-tetrahydrofolate. Its pathway is cofactor biosynthesis; (R)-pantothenate biosynthesis; (R)-pantoate from 3-methyl-2-oxobutanoate: step 1/2. In terms of biological role, catalyzes the reversible reaction in which hydroxymethyl group from 5,10-methylenetetrahydrofolate is transferred onto alpha-ketoisovalerate to form ketopantoate. The chain is 3-methyl-2-oxobutanoate hydroxymethyltransferase from Bacillus cereus (strain ATCC 10987 / NRS 248).